The primary structure comprises 177 residues: 2''-aminoglycoside nucleotidyltransferase (177 aa).

The tract at residues 1 to 92 (MDTTQVTLIH…ELLDCEPAWW (92 aa)) is N-terminal domain. 3 residues coordinate Mg(2+): Asp44, Asp46, and Asp86. Asp86 serves as the catalytic Proton acceptor. Positions 93–177 (ADEAYEIAEA…RAAFRSRYAA (85 aa)) are C-terminal domain. Residue Ala100 participates in kanamycin A binding.

In terms of assembly, monomer. Requires Mg(2+) as cofactor.

The enzyme catalyses nucleoside triphosphate + gentamicin = diphosphate + 2''-nucleotidylgentamicin.. In terms of biological role, mediates bacterial resistance to kanamycin, gentamicin, dibekacin, sisomicin and tobramycin by adenylating the 2''-hydroxyl group of these antibiotics. The chain is 2''-aminoglycoside nucleotidyltransferase from Klebsiella pneumoniae.